Reading from the N-terminus, the 217-residue chain is Uracil-DNA glycosylase (217 aa).

The active-site Proton acceptor is D62.

This sequence belongs to the uracil-DNA glycosylase (UDG) superfamily. UNG family.

It localises to the cytoplasm. It catalyses the reaction Hydrolyzes single-stranded DNA or mismatched double-stranded DNA and polynucleotides, releasing free uracil.. Functionally, excises uracil residues from the DNA which can arise as a result of misincorporation of dUMP residues by DNA polymerase or due to deamination of cytosine. The sequence is that of Uracil-DNA glycosylase from Streptococcus pyogenes serotype M49 (strain NZ131).